Here is a 20-residue protein sequence, read N- to C-terminus: Large ribosomal subunit protein bL31 (20 aa).

Residues Xaa16 and Xaa18 each coordinate Zn(2+).

The protein belongs to the bacterial ribosomal protein bL31 family. Type A subfamily. As to quaternary structure, part of the 50S ribosomal subunit. Zn(2+) serves as cofactor.

Its function is as follows. Binds the 23S rRNA. In Ectopseudomonas mendocina (Pseudomonas mendocina), this protein is Large ribosomal subunit protein bL31 (rpmE).